Here is a 525-residue protein sequence, read N- to C-terminus: GMP synthase [glutamine-hydrolyzing] (525 aa).

One can recognise a Glutamine amidotransferase type-1 domain in the interval 9–207; that stretch reads RILILDFGSQ…VLDICRCTPL (199 aa). The Nucleophile role is filled by cysteine 86. Active-site residues include histidine 181 and glutamate 183. The 193-residue stretch at 208–400 folds into the GMPS ATP-PPase domain; it reads WTPAKIIEDA…LGLPYDMLYR (193 aa). 235–241 contacts ATP; it reads SGGVDSS.

As to quaternary structure, homodimer.

The enzyme catalyses XMP + L-glutamine + ATP + H2O = GMP + L-glutamate + AMP + diphosphate + 2 H(+). The protein operates within purine metabolism; GMP biosynthesis; GMP from XMP (L-Gln route): step 1/1. Catalyzes the synthesis of GMP from XMP. The sequence is that of GMP synthase [glutamine-hydrolyzing] from Sodalis glossinidius (strain morsitans).